Consider the following 685-residue polypeptide: UvrABC system protein C (685 aa).

Residues 15–93 (ALPGVYRYFD…IKTQNPRFNI (79 aa)) enclose the GIY-YIG domain. Residues 214–249 (QELLQAMEARMMAYSGQLAFEQAAEVRNQMQALSRV) enclose the UVR domain. Over residues 365 to 388 (AQGGDHAPAAQGGDPPPAASSGGH) the composition is skewed to low complexity. Positions 365–391 (AQGGDHAPAAQGGDPPPAASSGGHPLR) are disordered.

It belongs to the UvrC family. In terms of assembly, interacts with UvrB in an incision complex.

It is found in the cytoplasm. Its function is as follows. The UvrABC repair system catalyzes the recognition and processing of DNA lesions. UvrC both incises the 5' and 3' sides of the lesion. The N-terminal half is responsible for the 3' incision and the C-terminal half is responsible for the 5' incision. This chain is UvrABC system protein C, found in Verminephrobacter eiseniae (strain EF01-2).